Consider the following 424-residue polypeptide: 5-methylthioadenosine/S-adenosylhomocysteine deaminase (424 aa).

Residues H60 and H62 each coordinate Zn(2+). E89 and H181 together coordinate substrate. Residue H208 coordinates Zn(2+). Substrate is bound by residues E211 and D296. D296 is a binding site for Zn(2+).

Belongs to the metallo-dependent hydrolases superfamily. MTA/SAH deaminase family. Requires Zn(2+) as cofactor.

It catalyses the reaction S-adenosyl-L-homocysteine + H2O + H(+) = S-inosyl-L-homocysteine + NH4(+). It carries out the reaction S-methyl-5'-thioadenosine + H2O + H(+) = S-methyl-5'-thioinosine + NH4(+). Its function is as follows. Catalyzes the deamination of 5-methylthioadenosine and S-adenosyl-L-homocysteine into 5-methylthioinosine and S-inosyl-L-homocysteine, respectively. Is also able to deaminate adenosine. The protein is 5-methylthioadenosine/S-adenosylhomocysteine deaminase of Thermococcus kodakarensis (strain ATCC BAA-918 / JCM 12380 / KOD1) (Pyrococcus kodakaraensis (strain KOD1)).